We begin with the raw amino-acid sequence, 270 residues long: Cell division protein DivIB (270 aa).

The Cytoplasmic portion of the chain corresponds to 1-28; that stretch reads MAENKRVISIENRIPELKKYRKKKLVRH. Residues 29-49 traverse the membrane as a helical segment; it reads LAILIGIFVILIAITLYFLSP. Residues 50–270 are Extracellular-facing; the sequence is LSKLDKIAVS…AAKEKKETNE (221 aa). A POTRA domain is found at 51-119; sequence SKLDKIAVSG…NDVQINITEF (69 aa).

It belongs to the FtsQ/DivIB family. DivIB subfamily.

It is found in the cell membrane. Functionally, cell division protein that may be involved in stabilizing or promoting the assembly of the division complex. The protein is Cell division protein DivIB of Listeria monocytogenes serovar 1/2a (strain ATCC BAA-679 / EGD-e).